Reading from the N-terminus, the 286-residue chain is Fructose-bisphosphate aldolase (286 aa).

S50 is a binding site for D-glyceraldehyde 3-phosphate. D85 functions as the Proton donor in the catalytic mechanism. Zn(2+) contacts are provided by H86, D107, E137, and H181. Position 182 (G182) interacts with dihydroxyacetone phosphate. H209 is a Zn(2+) binding site. Dihydroxyacetone phosphate-binding positions include G210 to T212 and N231 to T234.

The protein belongs to the class II fructose-bisphosphate aldolase family. Requires Zn(2+) as cofactor.

The enzyme catalyses beta-D-fructose 1,6-bisphosphate = D-glyceraldehyde 3-phosphate + dihydroxyacetone phosphate. It participates in carbohydrate degradation; glycolysis; D-glyceraldehyde 3-phosphate and glycerone phosphate from D-glucose: step 4/4. Its function is as follows. Catalyzes the aldol condensation of dihydroxyacetone phosphate (DHAP or glycerone-phosphate) with glyceraldehyde 3-phosphate (G3P) to form fructose 1,6-bisphosphate (FBP) in gluconeogenesis and the reverse reaction in glycolysis. The sequence is that of Fructose-bisphosphate aldolase (fba) from Staphylococcus aureus (strain MSSA476).